A 262-amino-acid chain; its full sequence is Apolipoprotein A-I (262 aa).

The first 18 residues, 1-18 (MKAVVLTLAVLFLTGSQA), serve as a signal peptide directing secretion. Repeat copies occupy residues 67 to 88 (LKLL…EQLG) and 89 to 110 (PVTQ…QEMN). Residues 67–262 (LKLLDNWDTL…DEASKKLNAQ (196 aa)) are 10 X approximate tandem repeats. At methionine 109 the chain carries Methionine sulfoxide. The 3; half-length repeat unit spans residues 111–121 (KDLEEVKQKVQ). 5 consecutive repeat copies span residues 122 to 142 (PYLD…RQKV), 144 to 165 (PLGE…DRLS), 166 to 184 (PLAQ…KQLA), 185 to 206 (PYSD…EGGG), and 207 to 227 (SLAE…EKAK). Residues 228-238 (PALEDLRQGLM) form a 9; half-length repeat. Methionine 238 carries the methionine sulfoxide modification. Residues 239–262 (PVLESLKVSILAAIDEASKKLNAQ) form repeat 10.

This sequence belongs to the apolipoprotein A1/A4/E family. Homodimer. Interacts with APOA1BP and CLU. Component of a sperm activating protein complex (SPAP), consisting of APOA1, an immunoglobulin heavy chain, an immunoglobulin light chain and albumin. Interacts with NDRG1. Interacts with SCGB3A2. Interacts with NAXE and YJEFN3. Post-translationally, glycosylated. Palmitoylated. In terms of processing, phosphorylation sites are present in the extracellular medium. Major protein of plasma HDL, also found in chylomicrons.

The protein resides in the secreted. Functionally, participates in the reverse transport of cholesterol from tissues to the liver for excretion by promoting cholesterol efflux from tissues and by acting as a cofactor for the lecithin cholesterol acyltransferase (LCAT). As part of the SPAP complex, activates spermatozoa motility. This Pantholops hodgsonii (Chiru) protein is Apolipoprotein A-I (APOA1).